The following is a 1363-amino-acid chain: Xanthine dehydrogenase (1363 aa).

A 2Fe-2S ferredoxin-type domain is found at 35 to 121; sequence DTIRFYLNGT…GKHVITVEGI (87 aa). Cys73, Cys78, Cys81, Cys103, Cys142, Cys145, Cys177, and Cys179 together coordinate [2Fe-2S] cluster. An FAD-binding PCMH-type domain is found at 266-450; the sequence is FGNKRKKWYR…SSLRIPTASE (185 aa). FAD contacts are provided by residues 294-301, Phe374, 384-388, Asp397, and Lys459; these read LIGGSTET and SPAGN. Mo-molybdopterin-binding residues include Gln798 and Phe829. 2 residues coordinate substrate: Glu833 and Arg911. Mo-molybdopterin is bound at residue Arg943. Phe945 and Thr1041 together coordinate substrate. A Mo-molybdopterin-binding site is contributed by Ala1110. Glu1295 acts as the Proton acceptor in catalysis.

This sequence belongs to the xanthine dehydrogenase family. The cofactor is FAD. Mo-molybdopterin is required as a cofactor. [2Fe-2S] cluster serves as cofactor.

It localises to the peroxisome. It carries out the reaction xanthine + NAD(+) + H2O = urate + NADH + H(+). The catalysed reaction is hypoxanthine + NAD(+) + H2O = xanthine + NADH + H(+). In terms of biological role, key enzyme in purine degradation. Catalyzes the oxidation of hypoxanthine to xanthine. Catalyzes the oxidation of xanthine to uric acid. In Emericella nidulans (strain FGSC A4 / ATCC 38163 / CBS 112.46 / NRRL 194 / M139) (Aspergillus nidulans), this protein is Xanthine dehydrogenase (hxA).